The chain runs to 344 residues: N-acetyl-gamma-glutamyl-phosphate reductase (344 aa).

Cys148 is a catalytic residue.

The protein belongs to the NAGSA dehydrogenase family. Type 1 subfamily.

It is found in the cytoplasm. The enzyme catalyses N-acetyl-L-glutamate 5-semialdehyde + phosphate + NADP(+) = N-acetyl-L-glutamyl 5-phosphate + NADPH + H(+). It functions in the pathway amino-acid biosynthesis; L-arginine biosynthesis; N(2)-acetyl-L-ornithine from L-glutamate: step 3/4. In terms of biological role, catalyzes the NADPH-dependent reduction of N-acetyl-5-glutamyl phosphate to yield N-acetyl-L-glutamate 5-semialdehyde. This Clostridium kluyveri (strain NBRC 12016) protein is N-acetyl-gamma-glutamyl-phosphate reductase.